The sequence spans 86 residues: Small ribosomal subunit protein uS17 (86 aa).

This sequence belongs to the universal ribosomal protein uS17 family. Part of the 30S ribosomal subunit.

In terms of biological role, one of the primary rRNA binding proteins, it binds specifically to the 5'-end of 16S ribosomal RNA. This Lactococcus lactis subsp. cremoris (strain MG1363) protein is Small ribosomal subunit protein uS17.